The chain runs to 570 residues: NADPH oxidase 2 (570 aa).

At 2 to 9 (GNWAVNEG) the chain is on the cytoplasmic side. Residues 10-36 (LSIFVILVWLGLNVFLFVWYYRVYDIP) traverse the membrane as a helical segment. The Extracellular segment spans residues 37–46 (PKFFYTRKLL). The helical transmembrane segment at 47-72 (GSALALARAPAACLNFNCMLILLPVC) threads the bilayer. Residues 54–286 (RAPAACLNFN…MFLYLCERLV (233 aa)) form the Ferric oxidoreductase domain. The Cytoplasmic segment spans residues 73-95 (RNLLSFLRGSSACCSTRVRRQLD). Residues 96–130 (RNLTFHKMVAWMIALHSAIHTIAHLFNVEWCVNAR) traverse the membrane as a helical segment. 2 residues coordinate heme b: His-101 and His-115. Over 131 to 163 (VNNSDPYSVALSELGDRQNESYLNFARKRIKNP) the chain is Extracellular. Residues Asn-132 and Asn-149 are each glycosylated (N-linked (GlcNAc...) asparagine). Lys-161 participates in a covalent cross-link: Glycyl lysine isopeptide (Lys-Gly) (interchain with G-Cter in ubiquitin). A helical membrane pass occupies residues 164–194 (EGGLYLAVTLLAGITGVVITLCLILIITSST). Residues 195-203 (KTIRRSYFE) are Cytoplasmic-facing. Arg-199 and Ser-200 together coordinate FAD. Residues 204 to 222 (VFWYTHHLFVIFFIGLAIH) traverse the membrane as a helical segment. Trp-206, His-209, His-222, Arg-226, and Ile-227 together coordinate heme b. The Extracellular portion of the chain corresponds to 223-267 (GAERIVRGQTAESLAVHNITVCEQKISEWGKIKECPIPQFAGNPP). Residue Asn-240 is glycosylated (N-linked (GlcNAc...) asparagine). Lys-255 is covalently cross-linked (Glycyl lysine isopeptide (Lys-Gly) (interchain with G-Cter in ubiquitin)). Heme b-binding residues include Met-268, Tyr-280, and Arg-287. A helical membrane pass occupies residues 268–285 (MTWKWIVGPMFLYLCERL). At 286–570 (VRFWRSQQKV…VHFIFNKENF (285 aa)) the chain is on the cytoplasmic side. Residues 287–397 (RFWRSQQKVV…DGPFGTASED (111 aa)) enclose the FAD-binding FR-type domain. Glycyl lysine isopeptide (Lys-Gly) (interchain with G-Cter in ubiquitin) cross-links involve residues Lys-294, Lys-299, Lys-306, Lys-328, and Lys-334. 8 residues coordinate FAD: Trp-337, His-338, Pro-339, Thr-341, His-354, Arg-356, Trp-361, and Thr-362. Lys-381 participates in a covalent cross-link: Glycyl lysine isopeptide (Lys-Gly) (interchain with G-Cter in ubiquitin). The NADPH site is built by Ile-411, Arg-446, and Thr-481. Lys-506 is covalently cross-linked (Glycyl lysine isopeptide (Lys-Gly) (interchain with G-Cter in ubiquitin)). Residue Arg-513 coordinates NADPH. Lys-567 participates in a covalent cross-link: Glycyl lysine isopeptide (Lys-Gly) (interchain with G-Cter in ubiquitin).

As to quaternary structure, component of the phagocyte NADPH oxidase core complex/cytochrome b558 complex, composed of CYBB (heavy chain (beta)) and CYBA (light chain (alpha)). Component of the phagocyte NADPH oxidase complex composed of an obligatory core heterodimer formed by the membrane proteins CYBA and CYBB and the cytosolic regulatory subunits NCF1/p47-phox, NCF2/p67-phox, NCF4/p40-phox and the small GTPase RAC1 or RAC2. Interacts with NCF1 (phosphorylated form). Interacts with NCF2; the interaction is enhanced in the presence of GBP7. Interacts with RAC2. Interacts with RAC1. Interacts with calprotectin (S100A8/9). Interacts with NRROS; the interaction is direct and impairs formation of a stable NADPH oxidase complex. Interacts with CYBC1; CYBC1 may act as a chaperone stabilizing Cytochrome b-245 heterodimer. The CYBA-CYBB complex interacts with GBP7. FAD is required as a cofactor. Glycosylated. Post-translationally, phosphorylated on Ser and Thr residues by PKC during neutrophils activation. Phosphorylation enhances the NADPH oxidase activity and stimulates its interaction with RAC2, NCF2/p67-phox, and NCF1/p47-phox. In terms of processing, undergoes 'Lys-48'-linked polyubiquitination, likely by RNF145, triggering endoplasmic reticulum-associated degradation. In terms of tissue distribution, detected in neutrophils (at protein level).

It localises to the cell membrane. The enzyme catalyses NADPH + 2 O2 = 2 superoxide + NADP(+) + H(+). In terms of biological role, catalytic subunit of the phagocyte NADPH oxidase complex that mediates the transfer of electrons from cytosolic NADPH to O2 to produce the superoxide anion (O2(-)). In the activated complex, electrons are first transferred from NADPH to flavin adenine dinucleotide (FAD) and subsequently transferred via two heme molecules to molecular oxygen, producing superoxide through an outer-sphere reaction. Activation of the NADPH oxidase complex is initiated by the assembly of cytosolic subunits of the NADPH oxidase complex with the core NADPH oxidase complex to form a complex at the plasma membrane or phagosomal membrane. This activation process is initiated by phosphorylation dependent binding of the cytosolic NCF1/p47-phox subunit to the C-terminus of CYBA/p22-phox. NADPH oxidase complex assembly is impaired through interaction with NRROS. This chain is NADPH oxidase 2, found in Homo sapiens (Human).